Consider the following 113-residue polypeptide: MYMIVVKYLYALCSSFFDCILNFNETVFGPSHRAFNPNNIIFIVDFQNFNILDSNMLVSHMTRHLSSWQYPTWVLVLTIRTTVSMHNRCTMRCSQTLESIPFHHTSKTFAFAD.

The protein localises to the cytoplasm. It localises to the nucleus. This is an uncharacterized protein from Saccharomyces cerevisiae (strain ATCC 204508 / S288c) (Baker's yeast).